We begin with the raw amino-acid sequence, 356 residues long: 45 kDa calcium-binding protein (356 aa).

The signal sequence occupies residues 1-29 (MMSRQAFLCSLGSLYLSLLFVFLLMDVYA). Asparagine 33 is a glycosylation site (N-linked (GlcNAc...) asparagine). 5 consecutive EF-hand domains span residues 92-127 (KNRK…KTDE), 131-166 (EAVE…SKGL), 227-262 (MLKF…TVEN), 272-307 (WVKD…MNEY), and 308-343 (NALN…FTGS). Aspartate 105, aspartate 107, aspartate 109, lysine 111, glutamate 116, aspartate 144, aspartate 146, aspartate 148, histidine 150, glutamate 155, aspartate 240, aspartate 242, aspartate 244, lysine 246, glutamate 251, aspartate 285, asparagine 287, aspartate 289, glutamate 296, aspartate 321, asparagine 323, asparagine 325, histidine 327, and glutamate 332 together coordinate Ca(2+).

This sequence belongs to the CREC family.

The protein localises to the golgi apparatus lumen. In terms of biological role, may regulate calcium-dependent activities in the endoplasmic reticulum lumen or post-ER compartment. The chain is 45 kDa calcium-binding protein (SDF4) from Gallus gallus (Chicken).